The following is a 483-amino-acid chain: MEHYSLAQLSKALHNREFSSVELTQHCINKIQSNKDLNAFISLDEDQALKEAQSADLVLKNGEGKPLTGIPMALKDLFCTKRLNTTCASKMLANFQAPYDATIVTKFKQNGAIIIGKTNMDEFAMGSSNENSYFGSVKNPWDRERVPGGSSGGSAAAVAGNLVPFAIGSDTGGSIRQPAAFCGISGIKPTYGLVSRYGMVAFASSLDQAGPFAKSAEDLAMILHCIAGFDSKDSTSVDRVIPDYSAEIKKPVDKIRIGLPSCFFQPQVEKGIQDAIHDAVKLFENLGAEIIEIDLKLQPLWVPCYYVIACAEASSNLSRYDGIRFGHRSKSASTLIELITNSRSEGFGNEVKRRILTGTHVLSTGFFNAYYLHAQKVRRLIRDELITTLNSVDVIIGPTTPTTAFKLGEKINDPIQNYLADVFTVAANLAGLPAISIPTGFENKLPIGLQLMGKHFSESRLLAIAHHYQQHTNWHLANPNKQG.

Catalysis depends on charge relay system residues K75 and S150. S174 functions as the Acyl-ester intermediate in the catalytic mechanism.

The protein belongs to the amidase family. GatA subfamily. As to quaternary structure, heterotrimer of A, B and C subunits.

It carries out the reaction L-glutamyl-tRNA(Gln) + L-glutamine + ATP + H2O = L-glutaminyl-tRNA(Gln) + L-glutamate + ADP + phosphate + H(+). In terms of biological role, allows the formation of correctly charged Gln-tRNA(Gln) through the transamidation of misacylated Glu-tRNA(Gln) in organisms which lack glutaminyl-tRNA synthetase. The reaction takes place in the presence of glutamine and ATP through an activated gamma-phospho-Glu-tRNA(Gln). The sequence is that of Glutamyl-tRNA(Gln) amidotransferase subunit A from Legionella pneumophila (strain Corby).